The chain runs to 177 residues: uncharacterized protein (177 aa).

Transmembrane regions (helical) follow at residues N20–L42, V62–S84, A94–I116, and G136–A158.

The protein resides in the cell membrane. This is an uncharacterized protein from Methanocaldococcus jannaschii (strain ATCC 43067 / DSM 2661 / JAL-1 / JCM 10045 / NBRC 100440) (Methanococcus jannaschii).